Here is a 411-residue protein sequence, read N- to C-terminus: Tyrosine--tRNA ligase (411 aa).

Residue tyrosine 34 coordinates L-tyrosine. Residues 39-48 (CTATSLHIGS) carry the 'HIGH' region motif. Tyrosine 171 and glutamine 175 together coordinate L-tyrosine. Positions 231-235 (KMGKT) match the 'KMSKS' region motif. Position 234 (lysine 234) interacts with ATP. An S4 RNA-binding domain is found at 345-411 (ISAYELFHEA…GKKKHILVRV (67 aa)).

It belongs to the class-I aminoacyl-tRNA synthetase family. TyrS type 1 subfamily. In terms of assembly, homodimer.

The protein localises to the cytoplasm. The enzyme catalyses tRNA(Tyr) + L-tyrosine + ATP = L-tyrosyl-tRNA(Tyr) + AMP + diphosphate + H(+). Functionally, catalyzes the attachment of tyrosine to tRNA(Tyr) in a two-step reaction: tyrosine is first activated by ATP to form Tyr-AMP and then transferred to the acceptor end of tRNA(Tyr). The protein is Tyrosine--tRNA ligase of Rickettsia conorii (strain ATCC VR-613 / Malish 7).